Here is an 838-residue protein sequence, read N- to C-terminus: Envelope glycoprotein H (838 aa).

A signal peptide spans 1–18 (MGNGLWFVGVIILGVAWG). Over 19–803 (QVHDWTEQTD…DTQPVAAIAP (785 aa)) the chain is Virion surface. N73 and N120 each carry an N-linked (GlcNAc...) asparagine; by host glycan. The tract at residues 174–204 (FPRGDNVATASHPSGPRDTPPPRPPVGARRH) is disordered. N216 carries an N-linked (GlcNAc...) asparagine; by host glycan. The interaction with gL stretch occupies residues 259 to 323 (DAALVRARYG…PGGPRYRVFV (65 aa)). N332, N437, N670, and N784 each carry an N-linked (GlcNAc...) asparagine; by host glycan. Residues 804-824 (GFLAASALGVVMITAALAGIL) form a helical membrane-spanning segment. Over 825–838 (KVLRTSVPFFWRRE) the chain is Intravirion.

The protein belongs to the herpesviridae glycoprotein H family. In terms of assembly, interacts with glycoprotein L (gL); this interaction is necessary for the correct processing and cell surface expression of gH. The heterodimer gH/gL seems to interact with gB trimers during fusion. Associates with the gB-gH/gL-gD complex. Interacts with VP16. N-glycosylated, O-glycosylated, and sialylated.

Its subcellular location is the virion membrane. It is found in the host cell membrane. It localises to the host endosome membrane. In terms of biological role, the heterodimer glycoprotein H-glycoprotein L is required for the fusion of viral and plasma membranes leading to virus entry into the host cell. Following initial binding to host receptor, membrane fusion is mediated by the fusion machinery composed of gB and the heterodimer gH/gL. May also be involved in the fusion between the virion envelope and the outer nuclear membrane during virion morphogenesis. The protein is Envelope glycoprotein H of Human herpesvirus 1 (strain 17) (HHV-1).